The primary structure comprises 887 residues: Probable alpha/beta-glucosidase agdC (887 aa).

The N-terminal stretch at Met1–Ala17 is a signal peptide. Residues Asn171, Asn293, and Asn373 are each glycosylated (N-linked (GlcNAc...) asparagine). Asp422 acts as the Nucleophile in catalysis. The active site involves Glu425. The interval Pro457 to Val483 is disordered. Asp571 serves as the catalytic Proton donor. Asn747 and Asn879 each carry an N-linked (GlcNAc...) asparagine glycan.

Belongs to the glycosyl hydrolase 31 family.

The protein localises to the secreted. It carries out the reaction Hydrolysis of terminal, non-reducing (1-&gt;4)-linked alpha-D-glucose residues with release of alpha-D-glucose.. It catalyses the reaction Hydrolysis of terminal, non-reducing beta-D-glucosyl residues with release of beta-D-glucose.. Its function is as follows. Glucosidase involved in the degradation of cellulosic biomass. Has both alpha- and beta-glucosidase activity. The chain is Probable alpha/beta-glucosidase agdC (agdC) from Aspergillus clavatus (strain ATCC 1007 / CBS 513.65 / DSM 816 / NCTC 3887 / NRRL 1 / QM 1276 / 107).